Here is a 369-residue protein sequence, read N- to C-terminus: Polycomb group protein FERTILIZATION-INDEPENDENT ENDOSPERM (369 aa).

7 WD repeats span residues 31-73 (EGKK…AISA), 81-123 (DKEE…IHKS), 126-166 (GHGD…CILI), 172-212 (GHRY…TYVE), 238-275 (IHTN…NSPG), 287-328 (VPMC…PVLI), and 335-368 (QSKS…DVIT).

Belongs to the WD repeat ESC family. In terms of assembly, interacts directly with MEA. These two proteins are probably indirectly associated with FIS2. In plants, PcG complexes are probably composed of a member of the EZ family (CLF or MEA), FIE, and a member of the VEFS family (FIS2, VRN2 or EMF2). Component of the plant homeodomain / polycomb repressive complex 2 (PHD-PRC2) large complex during prolonged cold, composed of core PRC2 components (VRN2, EZA1, FIE and MSI1), and three related PHD finger proteins (VIL1, VIL2 and VIN3) that mediates histone H3 trimethylation on 'Lys-27' (H3K27me3). Binds to ALP1. In terms of tissue distribution, expressed in cauline leaves, root and stems. In the male reproductive organ, it is expressed in the developing anther; and is abundant in microspore mother cells, in microsporocytes and in the tapetum, but is absent from vascular bundles, the connective tissue and the filament. It is also absent from pollen grains at subsequent developmental stages. In the developing female reproductive organs, it is highly expressed in all cells of the young ovules primordium before archesporial differentiation. Then, it is highly expressed in the ovule sporophytic tissue and the megaspore mother cell before meiosis, but is absent from placenta or the developing carpel. Then, it decreases.

The protein localises to the nucleus. Its function is as follows. Polycomb group (PcG) protein. PcG proteins act by forming multiprotein complexes, which are required to maintain the transcriptionally repressive state of homeotic genes throughout development. PcG proteins are not required to initiate repression, but to maintain it during later stages of development. They probably act via the methylation of histones, rendering chromatin heritably changed in its expressibility. Required to prevent the proliferation of the central cell by repressing unknown target genes before fertilization. Probably also involved in floral repression mechanism established during early plant development. Regulates the anteroposterior organization of the endosperm. Interacts with the promoter and represses the transcription of genes such as PHE1, that are paternally active and maternally silenced. This is Polycomb group protein FERTILIZATION-INDEPENDENT ENDOSPERM (FIE) from Arabidopsis thaliana (Mouse-ear cress).